The following is a 128-amino-acid chain: Sulfurtransferase TusD (128 aa).

Cysteine 78 serves as the catalytic Cysteine persulfide intermediate.

The protein belongs to the DsrE/TusD family. In terms of assembly, heterohexamer, formed by a dimer of trimers. The hexameric TusBCD complex contains 2 copies each of TusB, TusC and TusD. The TusBCD complex interacts with TusE.

Its subcellular location is the cytoplasm. In terms of biological role, part of a sulfur-relay system required for 2-thiolation of 5-methylaminomethyl-2-thiouridine (mnm(5)s(2)U) at tRNA wobble positions. Accepts sulfur from TusA and transfers it in turn to TusE. The chain is Sulfurtransferase TusD from Citrobacter koseri (strain ATCC BAA-895 / CDC 4225-83 / SGSC4696).